The following is a 1070-amino-acid chain: Potassium/chloride cotransporter 3 (1070 aa).

A run of 15 helical transmembrane segments spans residues 92–112 (GVMLGVYLPTIQHILGVTMFI), 114–134 (LFWVVGMSGVAWTMALLAICC), 142–162 (ISLSAVATNGVVESGGAYFII), 174–194 (VGILFYLANTVAASMYIVGGV), 196–216 (VILMYLWPEMAIGGADALHDT), 228–248 (LYGTVFLLIQALIVAMGVKFV), 251–271 (LAPVSLMCVILAIAACIGGGI), 400–420 (FFMLMAIYFPAVTGIFTGTNM), 433–453 (VGTIAATLTTSAIYYILAILF), 473–493 (TMVVAALSWPHPAVVTVGAFL), 534–554 (PFLGLVLTVIIAECGILLGAV), 557–577 (IAEVLDFFFLMCYAFVNLIAV), 600–620 (LLGAALCFFIMFASSVPLACI), 791–811 (LVLFAEEIIHGAANDNCLIVT), and 827–847 (FIDIWWIVQDGGILMLIAYLL).

As to expression, expressed in the amphid sheath glia and the cephalic sheath glia. Also expressed in the inner labial and outer labial sheath and socket glia and as well as phasmid sheath glia.

It is found in the cell membrane. Probable potassium/chloride cotransporter that functions in the amphid sheath glial cells to regulate thermotaxis behavior. By maintaining chloride homeostasis, negatively regulates guanylate cyclase gcy-8 in the thermosensory AFD neurons and thereby controls the microvilli receptive ending morphology of the AFD neurons and thermotaxis. Modulates the temperature-evoked neuronal activity of the AFD neurons such as calcium responses to temperature gradients. Might also play a role in the chemotaxis behavior mediated by the sensory neurons AWA and AWC. The protein is Potassium/chloride cotransporter 3 (kcc-3) of Caenorhabditis elegans.